Here is a 345-residue protein sequence, read N- to C-terminus: Transmembrane protein 144 homolog (345 aa).

10 helical membrane-spanning segments follow: residues Ile-3–Pro-23, Gly-32–Ser-52, Pro-61–Met-81, Ile-84–Ala-104, Pro-120–Ile-140, Leu-193–Ile-213, Val-233–Ile-253, Leu-265–Val-285, Ala-293–Phe-313, and Leu-324–Ser-344.

It belongs to the TMEM144 family.

It localises to the membrane. The sequence is that of Transmembrane protein 144 homolog from Caenorhabditis elegans.